A 453-amino-acid chain; its full sequence is UDP-N-acetylmuramoylalanine--D-glutamate ligase (453 aa).

119–125 (GSNGKTT) contributes to the ATP binding site.

The protein belongs to the MurCDEF family.

It is found in the cytoplasm. It carries out the reaction UDP-N-acetyl-alpha-D-muramoyl-L-alanine + D-glutamate + ATP = UDP-N-acetyl-alpha-D-muramoyl-L-alanyl-D-glutamate + ADP + phosphate + H(+). Its pathway is cell wall biogenesis; peptidoglycan biosynthesis. Cell wall formation. Catalyzes the addition of glutamate to the nucleotide precursor UDP-N-acetylmuramoyl-L-alanine (UMA). The polypeptide is UDP-N-acetylmuramoylalanine--D-glutamate ligase (Streptococcus uberis (strain ATCC BAA-854 / 0140J)).